Reading from the N-terminus, the 511-residue chain is Cytochrome P450 26B1 (511 aa).

Position 440 (C440) interacts with heme.

It belongs to the cytochrome P450 family. The cofactor is heme.

Its subcellular location is the endoplasmic reticulum membrane. It localises to the microsome membrane. It catalyses the reaction all-trans-retinoate + reduced [NADPH--hemoprotein reductase] + O2 = all-trans-4-hydroxyretinoate + oxidized [NADPH--hemoprotein reductase] + H2O + H(+). The enzyme catalyses all-trans-retinoate + reduced [NADPH--hemoprotein reductase] + O2 = all-trans-18-hydroxyretinoate + oxidized [NADPH--hemoprotein reductase] + H2O + H(+). A cytochrome P450 monooxygenase involved in the metabolism of retinoates (RAs), the active metabolites of vitamin A, and critical signaling molecules in animals. RAs exist as at least four different isomers: all-trans-RA (atRA), 9-cis-RA, 13-cis-RA, and 9,13-dicis-RA, where atRA is considered to be the biologically active isomer, although 9-cis-RA and 13-cis-RA also have activity. Catalyzes the hydroxylation of atRA primarily at C-4 and C-18, thereby contributing to the regulation of atRA homeostasis and signaling. Hydroxylation of atRA limits its biological activity and initiates a degradative process leading to its eventual elimination. Involved in the convertion of atRA to all-trans-4-oxo-RA. Can oxidize all-trans-13,14-dihydroretinoate (DRA) to metabolites which could include all-trans-4-oxo-DRA, all-trans-4-hydroxy-DRA, all-trans-5,8-epoxy-DRA, and all-trans-18-hydroxy-DRA. Plays a role in skeletal development, both at the level of patterning and in the ossification of bone and the establishment of some synovial joints. This is Cytochrome P450 26B1 from Danio rerio (Zebrafish).